A 309-amino-acid polypeptide reads, in one-letter code: ATP-dependent Clp protease proteolytic subunit 3, chloroplastic (309 aa).

A chloroplast-targeting transit peptide spans 1 to 70; it reads MEMSLRLASS…WDVSSFSIDS (70 aa). Position 71 is an N-acetylvaline (Val71). Catalysis depends on Ser164, which acts as the Nucleophile. The active site involves His189. At Thr194 the chain carries Phosphothreonine. The tract at residues 290 to 309 is disordered; sequence DNTNLPSERSMTQNGYAAIE. Polar residues predominate over residues 292–309; the sequence is TNLPSERSMTQNGYAAIE.

Belongs to the peptidase S14 family. As to quaternary structure, component of the chloroplastic Clp protease core complex which consist of at least 16 proteins: CLPP4 (3 copies), CLPP5 (3 copies), CLPR4 (2 copies), ClpP1 (1 copy), CLPP6 (1 copy), CLPR2 (1 copy), CLPT1 (1 copy), CLPT2 (1 copy) and 3 copies of CLPP3 and/or CLPR1 and/or CLPR3. The core complex is organized in two heptameric rings, one containing CLPP3,4,5,6 in a 1:2:3:1 ratio and the other CLPP1 and CLPR1,2,3,4 in a 3:1:1:1:1 ratio. Interacts with CHIP. Post-translationally, ubiquitinated in vitro by CHIP. In terms of tissue distribution, mostly expressed in leaves. Also detected in stems, and to a lower extent, in roots (at protein level).

It localises to the plastid. Its subcellular location is the chloroplast stroma. The catalysed reaction is Hydrolysis of proteins to small peptides in the presence of ATP and magnesium. alpha-casein is the usual test substrate. In the absence of ATP, only oligopeptides shorter than five residues are hydrolyzed (such as succinyl-Leu-Tyr-|-NHMec, and Leu-Tyr-Leu-|-Tyr-Trp, in which cleavage of the -Tyr-|-Leu- and -Tyr-|-Trp bonds also occurs).. In terms of biological role, cleaves peptides in various proteins in a process that requires ATP hydrolysis. Has a chymotrypsin-like activity. Plays a major role in the degradation of misfolded proteins. In the absence of CLPP3, modified ClpPR core(s) could be formed, albeit at strongly reduced levels. In Arabidopsis thaliana (Mouse-ear cress), this protein is ATP-dependent Clp protease proteolytic subunit 3, chloroplastic.